The sequence spans 550 residues: Parathyroid hormone 2 receptor (550 aa).

A signal peptide spans 1–24 (MAGLGASLHVWGWLMLGSCLLARA). The Extracellular portion of the chain corresponds to 27-145 (DSDGTITIEE…GKQEFFERLY (119 aa)). 4 N-linked (GlcNAc...) asparagine glycosylation sites follow: Asn-51, Asn-106, Asn-116, and Asn-121. The chain crosses the membrane as a helical span at residues 146–169 (VMYTVGYSISFGSLAVAILIIGYF). The Cytoplasmic segment spans residues 170 to 176 (RRLHCTR). The chain crosses the membrane as a helical span at residues 177 to 196 (NYIHMHLFVSFMLRATSIFV). At 197–237 (KDRVVHAHIGVKELESLIMQDDPQNSIEATSVDKSQYIGCK) the chain is on the extracellular side. A helical membrane pass occupies residues 238–260 (IAVVMFIYFLATNYYWILVEGLY). Over 261–275 (LHNLIFVAFFSDTKY) the chain is Cytoplasmic. The helical transmembrane segment at 276–297 (LWGFILIGWGFPAAFVAAWAVA) threads the bilayer. Over 298-316 (RATLADARCWELSAGDIKW) the chain is Extracellular. The chain crosses the membrane as a helical span at residues 317-337 (IYQAPILAAIGLNFILFLNTV). The Cytoplasmic segment spans residues 338 to 364 (RVLATKIWETNAVGHDTRKQYRKLAKS). Residues 365 to 383 (TLVLVLVFGVHYIVFVCLP) traverse the membrane as a helical segment. Over 384-394 (HSFTGLGWEIR) the chain is Extracellular. A helical membrane pass occupies residues 395–417 (MHCELFFNSFQGFFVSIIYCYCN). Over 418 to 550 (GEVQAEVKKM…GCQGETEDVL (133 aa)) the chain is Cytoplasmic. The span at 511–531 (EETKEDSGRQGDDILMEKPSR) shows a compositional bias: basic and acidic residues. Residues 511-550 (EETKEDSGRQGDDILMEKPSRPMESNPDTEGCQGETEDVL) form a disordered region.

It belongs to the G-protein coupled receptor 2 family. Binds to TIPF39/TIP39. In terms of tissue distribution, expressed abundantly in brain and pancreas. Also expressed in the testis.

It is found in the cell membrane. Functionally, this is a specific receptor for parathyroid hormone. The activity of this receptor is mediated by G proteins which activate adenylyl cyclase. PTH2R may be responsible for PTH effects in a number of physiological systems. It may play a significant role in pancreatic function. PTH2R presence in neurons indicates that it may function as a neurotransmitter receptor. In Homo sapiens (Human), this protein is Parathyroid hormone 2 receptor (PTH2R).